Reading from the N-terminus, the 160-residue chain is Phosphopantetheine adenylyltransferase (160 aa).

Substrate is bound at residue S10. ATP-binding positions include 10–11 (SF) and H18. The substrate site is built by K42, T74, and R88. ATP is bound by residues 89–91 (GLR), E99, and 124–130 (YSFISST).

Belongs to the bacterial CoaD family. Homohexamer. It depends on Mg(2+) as a cofactor.

The protein localises to the cytoplasm. The enzyme catalyses (R)-4'-phosphopantetheine + ATP + H(+) = 3'-dephospho-CoA + diphosphate. The protein operates within cofactor biosynthesis; coenzyme A biosynthesis; CoA from (R)-pantothenate: step 4/5. In terms of biological role, reversibly transfers an adenylyl group from ATP to 4'-phosphopantetheine, yielding dephospho-CoA (dPCoA) and pyrophosphate. The chain is Phosphopantetheine adenylyltransferase from Leptospira interrogans serogroup Icterohaemorrhagiae serovar copenhageni (strain Fiocruz L1-130).